The sequence spans 477 residues: Bifunctional protein HldE (477 aa).

The interval Met1–Thr318 is ribokinase. Residue Lys179 is modified to N6-acetyllysine. An ATP-binding site is contributed by Asn195–Glu198. Asp264 is a catalytic residue. The segment at Met344–Gly477 is cytidylyltransferase.

This sequence in the N-terminal section; belongs to the carbohydrate kinase PfkB family. In the C-terminal section; belongs to the cytidylyltransferase family. As to quaternary structure, homodimer.

It carries out the reaction D-glycero-beta-D-manno-heptose 7-phosphate + ATP = D-glycero-beta-D-manno-heptose 1,7-bisphosphate + ADP + H(+). The catalysed reaction is D-glycero-beta-D-manno-heptose 1-phosphate + ATP + H(+) = ADP-D-glycero-beta-D-manno-heptose + diphosphate. The protein operates within nucleotide-sugar biosynthesis; ADP-L-glycero-beta-D-manno-heptose biosynthesis; ADP-L-glycero-beta-D-manno-heptose from D-glycero-beta-D-manno-heptose 7-phosphate: step 1/4. It functions in the pathway nucleotide-sugar biosynthesis; ADP-L-glycero-beta-D-manno-heptose biosynthesis; ADP-L-glycero-beta-D-manno-heptose from D-glycero-beta-D-manno-heptose 7-phosphate: step 3/4. It participates in bacterial outer membrane biogenesis; LPS core biosynthesis. Its function is as follows. Catalyzes the phosphorylation of D-glycero-D-manno-heptose 7-phosphate at the C-1 position to selectively form D-glycero-beta-D-manno-heptose-1,7-bisphosphate. Functionally, catalyzes the ADP transfer from ATP to D-glycero-beta-D-manno-heptose 1-phosphate, yielding ADP-D-glycero-beta-D-manno-heptose. The chain is Bifunctional protein HldE from Escherichia coli O157:H7.